A 410-amino-acid polypeptide reads, in one-letter code: MPRFFARHAATLFFPMALILYDFAAYLSTDLIQPGIINVVRDFNADVSLAPAAVSLYLAGGMALQWLLGPLSDRIGRKPVLITGALIFTLACAATMFTTSMTQFLIARAIQGTSICFIATVGYVTVQEAFGQTKGIKLMAIITSIVLIAPIIGPLSGAALMHFVHWKVLFAIIAVMGFISFVGLLLAMPETVKRGAVPFSAKSVLRDFRNVFCNRLFLFGAATISLSYIPMMSWVAVSPVILIDAGGLTTSQFAWTQVPVFGAVIVANAIVARFVKDPTEPRFIWRAVPIQLVGLALLIIGNLLSPHVWLWSVLGTSLYAFGIGLIFPTLFRFTLFSNNLPKGTVSASLNMVILMVMSVSVEIGRWLWFNGGRLPFHLLAVVAGVIVVFTLAGLLNRVRQHQAAELAEEQ.

The Cytoplasmic segment spans residues 1-11 (MPRFFARHAAT). Residues 12 to 32 (LFFPMALILYDFAAYLSTDLI) traverse the membrane as a helical segment. The Periplasmic portion of the chain corresponds to 33–48 (QPGIINVVRDFNADVS). Residues 49 to 69 (LAPAAVSLYLAGGMALQWLLG) form a helical membrane-spanning segment. The Cytoplasmic portion of the chain corresponds to 70 to 78 (PLSDRIGRK). The helical transmembrane segment at 79–99 (PVLITGALIFTLACAATMFTT) threads the bilayer. Residues 100-103 (SMTQ) are Periplasmic-facing. A helical transmembrane segment spans residues 104–124 (FLIARAIQGTSICFIATVGYV). Residues 125–140 (TVQEAFGQTKGIKLMA) are Cytoplasmic-facing. The chain crosses the membrane as a helical span at residues 141-161 (IITSIVLIAPIIGPLSGAALM). Residues 162-167 (HFVHWK) are Periplasmic-facing. The helical transmembrane segment at 168-188 (VLFAIIAVMGFISFVGLLLAM) threads the bilayer. Topologically, residues 189 to 216 (PETVKRGAVPFSAKSVLRDFRNVFCNRL) are cytoplasmic. Residues 217–237 (FLFGAATISLSYIPMMSWVAV) traverse the membrane as a helical segment. Topologically, residues 238–251 (SPVILIDAGGLTTS) are periplasmic. The helical transmembrane segment at 252–272 (QFAWTQVPVFGAVIVANAIVA) threads the bilayer. At 273–282 (RFVKDPTEPR) the chain is on the cytoplasmic side. Residues 283–303 (FIWRAVPIQLVGLALLIIGNL) traverse the membrane as a helical segment. Residues 304–307 (LSPH) lie on the Periplasmic side of the membrane. Residues 308 to 328 (VWLWSVLGTSLYAFGIGLIFP) form a helical membrane-spanning segment. At 329–348 (TLFRFTLFSNNLPKGTVSAS) the chain is on the cytoplasmic side. Residues 349 to 369 (LNMVILMVMSVSVEIGRWLWF) form a helical membrane-spanning segment. Topologically, residues 370–373 (NGGR) are periplasmic. Residues 374–394 (LPFHLLAVVAGVIVVFTLAGL) traverse the membrane as a helical segment. The Cytoplasmic segment spans residues 395–410 (LNRVRQHQAAELAEEQ).

This sequence belongs to the major facilitator superfamily.

It localises to the cell inner membrane. In terms of biological role, proton-dependent efflux pump. Confers resistance to a broad spectrum of chemically unrelated substrates. This chain is Multidrug resistance protein MdtM (mdtM), found in Escherichia coli O157:H7.